The following is a 285-amino-acid chain: Acetyl-coenzyme A carboxylase carboxyl transferase subunit beta (285 aa).

Residues 22–285 (LWTKCEACGA…HPGVAYAPGV (264 aa)) form the CoA carboxyltransferase N-terminal domain. Residues cysteine 26, cysteine 29, cysteine 45, and cysteine 48 each contribute to the Zn(2+) site. The C4-type zinc finger occupies 26 to 48 (CEACGAQIYKKEFQENLHVCPKC).

The protein belongs to the AccD/PCCB family. As to quaternary structure, acetyl-CoA carboxylase is a heterohexamer composed of biotin carboxyl carrier protein (AccB), biotin carboxylase (AccC) and two subunits each of ACCase subunit alpha (AccA) and ACCase subunit beta (AccD). Zn(2+) is required as a cofactor.

The protein resides in the cytoplasm. It catalyses the reaction N(6)-carboxybiotinyl-L-lysyl-[protein] + acetyl-CoA = N(6)-biotinyl-L-lysyl-[protein] + malonyl-CoA. It functions in the pathway lipid metabolism; malonyl-CoA biosynthesis; malonyl-CoA from acetyl-CoA: step 1/1. Component of the acetyl coenzyme A carboxylase (ACC) complex. Biotin carboxylase (BC) catalyzes the carboxylation of biotin on its carrier protein (BCCP) and then the CO(2) group is transferred by the transcarboxylase to acetyl-CoA to form malonyl-CoA. The polypeptide is Acetyl-coenzyme A carboxylase carboxyl transferase subunit beta (Thermus thermophilus (strain ATCC 27634 / DSM 579 / HB8)).